Consider the following 210-residue polypeptide: Methylthioribulose-1-phosphate dehydratase (210 aa).

Zn(2+) contacts are provided by His-94 and His-96.

The protein belongs to the aldolase class II family. MtnB subfamily. The cofactor is Zn(2+).

The enzyme catalyses 5-(methylsulfanyl)-D-ribulose 1-phosphate = 5-methylsulfanyl-2,3-dioxopentyl phosphate + H2O. Its pathway is amino-acid biosynthesis; L-methionine biosynthesis via salvage pathway; L-methionine from S-methyl-5-thio-alpha-D-ribose 1-phosphate: step 2/6. Its function is as follows. Catalyzes the dehydration of methylthioribulose-1-phosphate (MTRu-1-P) into 2,3-diketo-5-methylthiopentyl-1-phosphate (DK-MTP-1-P). This chain is Methylthioribulose-1-phosphate dehydratase, found in Yersinia enterocolitica serotype O:8 / biotype 1B (strain NCTC 13174 / 8081).